Consider the following 214-residue polypeptide: 3-isopropylmalate dehydratase small subunit (214 aa).

This sequence belongs to the LeuD family. LeuD type 1 subfamily. In terms of assembly, heterodimer of LeuC and LeuD.

The catalysed reaction is (2R,3S)-3-isopropylmalate = (2S)-2-isopropylmalate. Its pathway is amino-acid biosynthesis; L-leucine biosynthesis; L-leucine from 3-methyl-2-oxobutanoate: step 2/4. Functionally, catalyzes the isomerization between 2-isopropylmalate and 3-isopropylmalate, via the formation of 2-isopropylmaleate. The protein is 3-isopropylmalate dehydratase small subunit of Alcanivorax borkumensis (strain ATCC 700651 / DSM 11573 / NCIMB 13689 / SK2).